The sequence spans 344 residues: Uroporphyrinogen decarboxylase (344 aa).

Substrate is bound by residues 25–29, Asp75, Tyr152, Ser207, and His323; that span reads RQAGR.

Belongs to the uroporphyrinogen decarboxylase family. In terms of assembly, homodimer.

It localises to the cytoplasm. The catalysed reaction is uroporphyrinogen III + 4 H(+) = coproporphyrinogen III + 4 CO2. The protein operates within porphyrin-containing compound metabolism; protoporphyrin-IX biosynthesis; coproporphyrinogen-III from 5-aminolevulinate: step 4/4. Catalyzes the decarboxylation of four acetate groups of uroporphyrinogen-III to yield coproporphyrinogen-III. The protein is Uroporphyrinogen decarboxylase of Ruegeria pomeroyi (strain ATCC 700808 / DSM 15171 / DSS-3) (Silicibacter pomeroyi).